The sequence spans 513 residues: ATP synthase subunit alpha 1 (513 aa).

169–176 (GDRQCGKT) lines the ATP pocket.

This sequence belongs to the ATPase alpha/beta chains family. As to quaternary structure, F-type ATPases have 2 components, CF(1) - the catalytic core - and CF(0) - the membrane proton channel. CF(1) has five subunits: alpha(3), beta(3), gamma(1), delta(1), epsilon(1). CF(0) has three main subunits: a(1), b(2) and c(9-12). The alpha and beta chains form an alternating ring which encloses part of the gamma chain. CF(1) is attached to CF(0) by a central stalk formed by the gamma and epsilon chains, while a peripheral stalk is formed by the delta and b chains.

Its subcellular location is the cell inner membrane. The enzyme catalyses ATP + H2O + 4 H(+)(in) = ADP + phosphate + 5 H(+)(out). Functionally, produces ATP from ADP in the presence of a proton gradient across the membrane. The alpha chain is a regulatory subunit. This chain is ATP synthase subunit alpha 1, found in Burkholderia pseudomallei (strain 1710b).